The following is an 863-amino-acid chain: Paramyosin (863 aa).

The interval M1–P18 is nonhelical region. Residues S19–I836 are a coiled coil. Residues G837 to M863 are nonhelical region.

Belongs to the paramyosin family. As to quaternary structure, homodimer or monomer in secreted form.

It localises to the cytoplasm. The protein resides in the myofibril. Its subcellular location is the secreted. Paramyosin is a major structural component of many thick filaments isolated from invertebrate muscles. It is a prominent antigen in human cysticercosis, may have a role as a modulator of the host immune response. It is able to bind collagen and has complement inhibitor activity. The chain is Paramyosin (PMY) from Taenia solium (Pork tapeworm).